The sequence spans 257 residues: Pimeloyl-[acyl-carrier protein] methyl ester esterase (257 aa).

The region spanning 15–241 is the AB hydrolase-1 domain; the sequence is HLVLLHGWGL…KAAHAPFVSH (227 aa). Substrate is bound by residues Trp22, 82-83, and 143-147; these read SL and FLALQ. The active-site Nucleophile is Ser82. Active-site residues include Asp207 and His235. Residue His235 coordinates substrate.

It belongs to the AB hydrolase superfamily. Carboxylesterase BioH family. In terms of assembly, monomer.

The protein resides in the cytoplasm. It catalyses the reaction 6-carboxyhexanoyl-[ACP] methyl ester + H2O = 6-carboxyhexanoyl-[ACP] + methanol + H(+). The protein operates within cofactor biosynthesis; biotin biosynthesis. Functionally, the physiological role of BioH is to remove the methyl group introduced by BioC when the pimeloyl moiety is complete. It allows to synthesize pimeloyl-ACP via the fatty acid synthetic pathway through the hydrolysis of the ester bonds of pimeloyl-ACP esters. In Klebsiella pneumoniae subsp. pneumoniae (strain ATCC 700721 / MGH 78578), this protein is Pimeloyl-[acyl-carrier protein] methyl ester esterase.